The chain runs to 83 residues: DNA-directed RNA polymerase subunit omega (83 aa).

Belongs to the RNA polymerase subunit omega family. As to quaternary structure, the RNAP catalytic core consists of 2 alpha, 1 beta, 1 beta' and 1 omega subunit. When a sigma factor is associated with the core the holoenzyme is formed, which can initiate transcription.

The catalysed reaction is RNA(n) + a ribonucleoside 5'-triphosphate = RNA(n+1) + diphosphate. Promotes RNA polymerase assembly. Latches the N- and C-terminal regions of the beta' subunit thereby facilitating its interaction with the beta and alpha subunits. The sequence is that of DNA-directed RNA polymerase subunit omega from Chromohalobacter salexigens (strain ATCC BAA-138 / DSM 3043 / CIP 106854 / NCIMB 13768 / 1H11).